Here is a 498-residue protein sequence, read N- to C-terminus: Pre-glycoprotein polyprotein GP complex (498 aa).

The N-myristoyl glycine; by host moiety is linked to residue Gly-2. The Extracellular segment spans residues Gly-2 to Glu-17. Residues Val-18–Lys-33 traverse the membrane as a helical segment. Residues Ala-34–Gly-58 are Cytoplasmic-facing. A Zn(2+)-binding site is contributed by Cys-57. At Met-59–Asp-438 the chain is on the extracellular side. Asn-85, Asn-95, Asn-114, Asn-124, and Asn-171 each carry an N-linked (GlcNAc...) asparagine; by host glycan. 6 cysteine pairs are disulfide-bonded: Cys-92–Cys-239, Cys-123–Cys-160, Cys-184–Cys-220, Cys-285–Cys-298, Cys-307–Cys-316, and Cys-370–Cys-391. N-linked (GlcNAc...) asparagine; by host glycosylation occurs at Asn-232. N-linked (GlcNAc...) asparagine; by host glycosylation is found at Asn-371, Asn-396, and Asn-401. Residues Leu-439–Pro-459 traverse the membrane as a helical segment. Over Thr-460–Arg-498 the chain is Cytoplasmic. Zn(2+)-binding residues include His-461, His-463, Cys-469, His-473, Cys-481, and Cys-483.

It belongs to the arenaviridae GPC protein family. As to quaternary structure, interacts with glycoprotein G2. Part of the GP complex (GP-C) together with glycoprotein G1 and glycoprotein G2. The GP-complex interacts with protein Z, which interacts with ribonucleocapsid; these interactions may induce virion budding. In terms of assembly, homotrimer; disulfide-linked. In pre-fusion state, G1 homotrimers bind G2 homotrimers via ionic interactions. Part of the GP complex (GP-C) together with glycoprotein G2 and the stable signal peptide. Interacts with the primary host receptor DAG1 on the cell surface. The GP-complex interacts with protein Z, which interacts with ribonucleocapsid; these interactions may induce virion budding. Homotrimer. Interacts with the stable signal peptide. In pre-fusion state, G2 homotrimers bind G1 homotrimers via ionic interactions. Part of the GP complex (GP-C) together with glycoprotein G1 and the stable signal peptide. Acidification in the endosome triggers rearrangements, which ultimately leads to a 6 helix bundle formed by the two heptad repeat domains (HR1 and HR2) in post-fusion state. The GP-complex interacts with protein Z, which interacts with ribonucleocapsid; these interactions may induce virion budding. Post-translationally, specific enzymatic cleavages in vivo yield mature proteins. GP-C polyprotein is cleaved in the endoplasmic reticulum by the host protease MBTPS1. Only cleaved glycoprotein is incorporated into virions. In terms of processing, the SSP remains stably associated with the GP complex following cleavage by signal peptidase and plays crucial roles in the trafficking of GP through the secretory pathway. Myristoylation is necessary for GP2-mediated fusion activity.

The protein resides in the virion membrane. It is found in the host endoplasmic reticulum membrane. Its subcellular location is the host Golgi apparatus membrane. It localises to the host cell membrane. Functionally, functions as a cleaved signal peptide that is retained as the third component of the GP complex (GP-C). Helps to stabilize the spike complex in its native conformation. The SSP is required for efficient glycoprotein expression, post-translational maturation cleavage of G1 and G2, glycoprotein transport to the cell surface plasma membrane, formation of infectious virus particles, and acid pH-dependent glycoprotein-mediated cell fusion. In terms of biological role, forms the virion spikes together with glycoprotein G2. The glycoprotein spike trimers are connected to the underlying matrix. Interacts with the host receptor. Mediates virus attachment to the host primary receptor alpha-dystroglycan DAG1 (alpha-DG) at the cell surface. Down-modulates host DAG1. Its function is as follows. Forms the virion spikes together with glycoprotein G1. The glycoprotein spike trimers are connected to the underlying matrix. Class I viral fusion protein that directs fusion of viral and host endosomal membranes, leading to delivery of the nucleocapsid into the cytoplasm. Membrane fusion is mediated by irreversible conformational changes induced by acidification. The polypeptide is Pre-glycoprotein polyprotein GP complex (Homo sapiens (Human)).